Consider the following 290-residue polypeptide: MTQQSLTLSLKKIYSGKVRDLYEIDDKRMLMVASDRLSAFDVILDDPIPRKGEILTQISNFWFNKLAHIMPNHFTGDSVYDVLPKEEADLIKDRAVVCKRLTPIKIESIVRGYLTGSGLKDYKQTGTICGLKLPENLVEASKLPEAIFTPSSKEEVGNHDINISYAECEKLIGSDLAAQVKEKAIALYTEASEYALTKGIIICDTKFEFGLDENGTLTLMDEVLTPDSSRFWSVDTYQAGTNPPSFDKQFVRDWLENSGWNKQAPAPKVPKNIIQKTVDKYQEALDLLTK.

The protein belongs to the SAICAR synthetase family.

The catalysed reaction is 5-amino-1-(5-phospho-D-ribosyl)imidazole-4-carboxylate + L-aspartate + ATP = (2S)-2-[5-amino-1-(5-phospho-beta-D-ribosyl)imidazole-4-carboxamido]succinate + ADP + phosphate + 2 H(+). It functions in the pathway purine metabolism; IMP biosynthesis via de novo pathway; 5-amino-1-(5-phospho-D-ribosyl)imidazole-4-carboxamide from 5-amino-1-(5-phospho-D-ribosyl)imidazole-4-carboxylate: step 1/2. This chain is Phosphoribosylaminoimidazole-succinocarboxamide synthase, found in Haemophilus influenzae (strain PittEE).